A 266-amino-acid chain; its full sequence is Nitrate import ATP-binding protein NrtD (266 aa).

The ABC transporter domain occupies 3–234 (LEITDLNRVF…DEETPKNRTY (232 aa)). ATP is bound at residue 39–46 (GASGSGKS).

This sequence belongs to the ABC transporter superfamily. Nitrate/nitrite/cyanate uptake transporter (NitT) (TC 3.A.1.16) family. The complex is composed of two ATP-binding proteins (NrtC and NrtD), two transmembrane proteins (NrtB) and a solute-binding protein (NrtA).

Its subcellular location is the cell inner membrane. The catalysed reaction is nitrate(out) + ATP + H2O = nitrate(in) + ADP + phosphate + H(+). In terms of biological role, part of the ABC transporter complex NrtABCD involved in nitrate uptake. The complex is probably also involved in nitrite transport. Probably responsible for energy coupling to the transport system. This is Nitrate import ATP-binding protein NrtD (nrtD) from Synechocystis sp. (strain ATCC 27184 / PCC 6803 / Kazusa).